Here is a 560-residue protein sequence, read N- to C-terminus: Protein GAT2 (560 aa).

3 disordered regions span residues 274–297 (RQQE…FSNK), 345–383 (FLST…ISSS), and 412–461 (LNTK…SDEK). Over residues 347–361 (STSSSSPSPTAGSAP) the composition is skewed to low complexity. Residues 369 to 378 (RQDDPNDKKM) show a composition bias toward basic and acidic residues. A compositionally biased stretch (basic residues) spans 414–425 (TKKKNNRGRPRA). Residues 428–456 (RQPTLTTSSHFINNSNPGAAAVSTTTPAA) show a composition bias toward polar residues. The GATA-type zinc finger occupies 472 to 497 (CFHCGETETPEWRKGPYGTRTLCNAC).

The protein is Protein GAT2 (GAT2) of Saccharomyces cerevisiae (strain ATCC 204508 / S288c) (Baker's yeast).